The sequence spans 340 residues: Deubiquitinase SseL (340 aa).

The active site involves His223. Cys285 acts as the Nucleophile in catalysis.

The protein belongs to the peptidase C79 family.

Its subcellular location is the secreted. The protein localises to the host cytoplasm. Effector proteins function to alter host cell physiology and promote bacterial survival in host tissues. This protease targets the host cell ubiquitin pathway by acting as a deubiquitinase in infected host cells. Specifically hydrolyzes mono- and polyubiquitin substrates in vitro with a preference for 'Lys-63'-linked ubiquitin chains, suggesting that it interferes with a signaling pathway rather than inhibiting proteasomal-dependent degradation of its targets. Does not possess desumoylating activity. Is required for the Salmonella-induced delayed cytotoxicity in macrophages and full virulence. Is not required for intracellular bacterial replication. The protein is Deubiquitinase SseL (sseL) of Salmonella typhimurium (strain LT2 / SGSC1412 / ATCC 700720).